A 323-amino-acid polypeptide reads, in one-letter code: Acetyl esterase (323 aa).

The short motif at 91–93 (HGG) is the Involved in the stabilization of the negatively charged intermediate by the formation of the oxyanion hole element. Catalysis depends on residues serine 165, aspartate 262, and histidine 292.

Belongs to the 'GDXG' lipolytic enzyme family. As to quaternary structure, homodimer. Interacts with MalT and MelA.

Its subcellular location is the cytoplasm. Functionally, displays esterase activity towards short chain fatty esters (acyl chain length of up to 8 carbons). Able to hydrolyze triacetylglycerol (triacetin) and tributyrylglycerol (tributyrin), but not trioleylglycerol (triolein) or cholesterol oleate. Negatively regulates MalT activity by antagonizing maltotriose binding. Inhibits MelA galactosidase activity. In Salmonella dublin (strain CT_02021853), this protein is Acetyl esterase.